The sequence spans 306 residues: MAGTFPPKISPTLMTPDPHFIPGYSGFCPQYRYSLGKTYGQLTSQLLTNPDIRRSELLVLQSNPFPPPRDHSFDGGSQELGGRRQHPGDPNLTISMIPGYTGFIPRSQKFFAKTYAETSRDALSDFHSERRGQEAQRQELLLMSKLQEGRLPRTEQEKQLLASRHRTPLPALAKEPAPFMALRGFQPQGSPYYMEEENPNKCFISGYTGYVPRSRFLIGSGYPITTNRAMVEFAHMNQKKGVRFSEGYKEGGSPHTEPGQIYLEELGLLPRYTGYVPGYKFQFGNTFGRLTQNALGHSTLQKQTVN.

The interval 61-92 (QSNPFPPPRDHSFDGGSQELGGRRQHPGDPNL) is disordered.

It belongs to the CIMIP2 family. In terms of tissue distribution, expressed in airway epithelial cells.

It is found in the cytoplasm. The protein resides in the cytoskeleton. Its subcellular location is the cilium axoneme. Functionally, microtubule inner protein (MIP) part of the dynein-decorated doublet microtubules (DMTs) in cilia axoneme, which is required for motile cilia beating. In Xenopus tropicalis (Western clawed frog), this protein is Ciliary microtubule inner protein 2B (cimip2b).